Reading from the N-terminus, the 342-residue chain is N-acetyl-gamma-glutamyl-phosphate reductase (342 aa).

The active site involves C147.

It belongs to the NAGSA dehydrogenase family. Type 1 subfamily.

Its subcellular location is the cytoplasm. The catalysed reaction is N-acetyl-L-glutamate 5-semialdehyde + phosphate + NADP(+) = N-acetyl-L-glutamyl 5-phosphate + NADPH + H(+). It participates in amino-acid biosynthesis; L-arginine biosynthesis; N(2)-acetyl-L-ornithine from L-glutamate: step 3/4. Functionally, catalyzes the NADPH-dependent reduction of N-acetyl-5-glutamyl phosphate to yield N-acetyl-L-glutamate 5-semialdehyde. This chain is N-acetyl-gamma-glutamyl-phosphate reductase, found in Campylobacter jejuni subsp. jejuni serotype O:2 (strain ATCC 700819 / NCTC 11168).